The sequence spans 566 residues: OTU domain-containing protein 5 (566 aa).

Disordered regions lie at residues 1-117 and 145-175; these read MTIL…GDAL and GPGHSKRRRQAPGVGAVGGASPEREEVGAGY. A compositionally biased stretch (pro residues) spans 11-30; that stretch reads PPDADPANEPPPPGPLPPAP. Gly residues predominate over residues 34–47; that stretch reads AGVGVGGGGTGVGG. The segment covering 63–75 has biased composition (pro residues); it reads ASPPPQGPLPGPP. Serine 64 bears the Phosphoserine mark. A compositionally biased stretch (low complexity) spans 84-97; sequence AVPPGAVAGPRPQQ. A compositionally biased stretch (gly residues) spans 105 to 115; sequence GPGGPGGGPGD. Serine 165 is modified (phosphoserine). At tyrosine 175 the chain carries Phosphotyrosine. Phosphoserine is present on serine 177. The residue at position 195 (threonine 195) is a Phosphothreonine. The region spanning 213–336 is the OTU domain; it reads FIIKQMKEDG…NIHYNSVVNP (124 aa). The cys-loop stretch occupies residues 218 to 224; the sequence is MKEDGAC. The active site involves aspartate 221. The active-site Nucleophile is cysteine 224. The tract at residues 273–283 is variable-loop; sequence KRKNNCHGNHI. At serine 323 the chain carries Phosphoserine. Positions 324–329 are his-loop; it reads YHRNIH. The active site involves histidine 329. Phosphoserine is present on residues serine 332 and serine 370. The interval 413–499 is disordered; it reads ARQVRGPSQP…TSSQFSAGGD (87 aa). Composition is skewed to low complexity over residues 425-438 and 445-457; these read ASATCSSATAAASS and SRSPRQRSSASSP. Serine 447 carries the phosphoserine modification. Residue threonine 502 is modified to Phosphothreonine. Serine 503 is subject to Phosphoserine.

This sequence belongs to the peptidase C85 family. Interacts with TRAF3. Phosphorylation at Ser-177 is required for deubiquitinating activity. Phosphorylation at Ser-323, Ser-332 and Ser-503 by MTOR promotes its activity.

It localises to the nucleus. It carries out the reaction Thiol-dependent hydrolysis of ester, thioester, amide, peptide and isopeptide bonds formed by the C-terminal Gly of ubiquitin (a 76-residue protein attached to proteins as an intracellular targeting signal).. With respect to regulation, inhibited by N-ethyl-maleimide (NEM). In terms of biological role, deubiquitinating enzyme that functions as a negative regulator of the innate immune system. Has peptidase activity towards 'Lys-48'- and 'Lys-63'-linked polyubiquitin chains. Can also cleave 'Lys-11'-linked ubiquitin chains (in vitro). Acts via TRAF3 deubiquitination and subsequent suppression of type I interferon (IFN) production. Controls neuroectodermal differentiation through cleaving 'Lys-48'-linked ubiquitin chains to counteract degradation of select chromatin regulators such as ARID1A, HDAC2 and HCF1. Acts as a positive regulator of mTORC1 and mTORC2 signaling following phosphorylation by MTOR: acts by mediating deubiquitination of BTRC, leading to its stability. The chain is OTU domain-containing protein 5 from Mus musculus (Mouse).